The primary structure comprises 388 residues: Glucose-6-phosphate/phosphate translocator 1, chloroplastic (388 aa).

The N-terminal 65 residues, 1-65 (MVLSVKQTLS…LRAKSPVVRC (65 aa)), are a transit peptide targeting the chloroplast. 8 helical membrane-spanning segments follow: residues 95–115 (LKIG…NIYN), 129–149 (STLS…VGIV), 158–178 (FWKT…AATV), 211–231 (FPTS…LSAL), 233–253 (ELNF…AFVF), 273–293 (YACL…AVEG), 305–325 (LATV…FYHL), and 363–383 (TPVQ…TFLY). The 118-residue stretch at 112–229 (NIYNKKVLNA…IPIIGGCALS (118 aa)) folds into the EamA domain.

This sequence belongs to the TPT transporter family. GPT (TC 2.A.7.9) subfamily. Expressed in seeds, flowers, rosette leaves, and roots, with highest levels found in stamens. Found in the root cap, in guard cells and in mesophyll cells.

It localises to the plastid. The protein resides in the chloroplast membrane. The protein localises to the endoplasmic reticulum membrane. Its subcellular location is the peroxisome membrane. Functionally, glucose 6-phosphate (Glc6P) transporter. Also transports inorganic phosphate, 3-phosphoglycerate, triose phosphates and, to a leser extent, phosphoenolpyruvate. Responsible for the transport of Glc6P into plastids of heterotrophic tissues where it can be used as a carbon source for starch biosynthesis, as substrate for fatty acid biosynthesis or as substrate for NADPH generation via the oxidative pentose phosphate pathway (OPPP). Required for pollen maturation and embryo sac development. Preferentially exchanges Glc6P for ribulose-5-phosphate (Ru5P) in reconstituted yeast proteoliposomes. May supply the substrate (Glc6P) for OPPP reactions inside peroxisomes and exchange it with the product Ru5P which leaves the organelle. The sequence is that of Glucose-6-phosphate/phosphate translocator 1, chloroplastic from Arabidopsis thaliana (Mouse-ear cress).